The primary structure comprises 186 residues: Protein SPMIP2 (186 aa).

The segment at 163 to 186 is disordered; that stretch reads SSLPRASKPPKLPKLPKKEKKRKH. Basic residues predominate over residues 176-186; sequence KLPKKEKKRKH.

The chain is Protein SPMIP2 from Homo sapiens (Human).